The primary structure comprises 354 residues: Mycothiol acetyltransferase (354 aa).

Residues 1–18 (MMVDNQTPDSSTLSTAST) show a composition bias toward polar residues. Residues 1–21 (MMVDNQTPDSSTLSTASTPVY) form a disordered region. N-acetyltransferase domains are found at residues 21–176 (YAEP…QTRE) and 191–354 (LRMR…EPAA). Glu-52 is a binding site for 1D-myo-inositol 2-(L-cysteinylamino)-2-deoxy-alpha-D-glucopyranoside. An acetyl-CoA-binding site is contributed by 101-103 (AAV). The 1D-myo-inositol 2-(L-cysteinylamino)-2-deoxy-alpha-D-glucopyranoside site is built by Glu-217, Lys-259, and Glu-274. Acetyl-CoA contacts are provided by residues 278-280 (VGV) and 285-291 (QGGGLGR). 1D-myo-inositol 2-(L-cysteinylamino)-2-deoxy-alpha-D-glucopyranoside is bound at residue Tyr-318.

Belongs to the acetyltransferase family. MshD subfamily. Monomer.

It catalyses the reaction 1D-myo-inositol 2-(L-cysteinylamino)-2-deoxy-alpha-D-glucopyranoside + acetyl-CoA = mycothiol + CoA + H(+). Functionally, catalyzes the transfer of acetyl from acetyl-CoA to desacetylmycothiol (Cys-GlcN-Ins) to form mycothiol. The polypeptide is Mycothiol acetyltransferase (Rothia mucilaginosa (strain DY-18) (Stomatococcus mucilaginosus)).